Reading from the N-terminus, the 168-residue chain is Photosystem I assembly protein Ycf3 (168 aa).

TPR repeat units follow at residues 29-62, 66-99, and 117-150; these read AFSY…EEDP, SYTL…NANL, and AQSL…APDN.

Belongs to the Ycf3 family.

It localises to the plastid. It is found in the chloroplast thylakoid membrane. Functionally, essential for the assembly of the photosystem I (PSI) complex. May act as a chaperone-like factor to guide the assembly of the PSI subunits. The polypeptide is Photosystem I assembly protein Ycf3 (Phaeodactylum tricornutum (strain CCAP 1055/1)).